Reading from the N-terminus, the 27-residue chain is Putative phosphoglycerate kinase (27 aa).

The protein belongs to the phosphoglycerate kinase family. Monomer. Requires Mg(2+) as cofactor.

It catalyses the reaction (2R)-3-phosphoglycerate + ATP = (2R)-3-phospho-glyceroyl phosphate + ADP. This chain is Putative phosphoglycerate kinase, found in Pinus strobus (Eastern white pine).